We begin with the raw amino-acid sequence, 557 residues long: Potassium-transporting ATPase potassium-binding subunit (557 aa).

Helical transmembrane passes span 5–25 (GFLL…PLGS), 63–83 (LCAI…MLLG), 132–152 (GLTV…FAFI), 170–190 (LLRI…LFFI), 253–273 (FVQM…FGEV), 283–303 (LLWA…WAEV), 329–349 (VLVS…AVIA), 356–376 (ALGG…FGGV), 379–399 (GLYG…LMIG), 416–436 (LTAL…ALAM), 484–504 (LLAF…MAIA), and 526–546 (LFVG…FIPA).

This sequence belongs to the KdpA family. The system is composed of three essential subunits: KdpA, KdpB and KdpC.

It is found in the cell inner membrane. Functionally, part of the high-affinity ATP-driven potassium transport (or Kdp) system, which catalyzes the hydrolysis of ATP coupled with the electrogenic transport of potassium into the cytoplasm. This subunit binds the periplasmic potassium ions and delivers the ions to the membrane domain of KdpB through an intramembrane tunnel. The polypeptide is Potassium-transporting ATPase potassium-binding subunit (Shigella boydii serotype 4 (strain Sb227)).